Here is a 552-residue protein sequence, read N- to C-terminus: Undecaprenyl phosphate-alpha-4-amino-4-deoxy-L-arabinose arabinosyl transferase (552 aa).

The next 11 membrane-spanning stretches (helical) occupy residues 4 to 24 (IAGWFTLAVLFVLYYIVPLPG), 81 to 101 (FAVRFGAVLATVLSALLVFWL), 113 to 133 (VVAVLIYLTSFLVYGVGSYAV), 176 to 196 (FMTKGFLALAIPVIAVLPWVI), 207 to 227 (FGPLAVLSAILISLPWVLAIA), 255 to 275 (APFWYYLPILLIGLLPWLGLL), 289 to 309 (QGGDFYLLGWAVMPFLLFSIA), 313 to 333 (LPTYILPCFAPLAILMAGYVQ), 351 to 371 (LLVGLGGMAAILLVLAPWGIT), 384 to 404 (VILGTIAFGVWALFGALSLYH), and 411 to 431 (WSAACLLGVALLIGTALPQQV).

The protein belongs to the glycosyltransferase 83 family.

The protein localises to the cell inner membrane. It carries out the reaction 4-amino-4-deoxy-alpha-L-arabinopyranosyl di-trans,octa-cis-undecaprenyl phosphate + lipid IVA = lipid IIA + di-trans,octa-cis-undecaprenyl phosphate.. It participates in lipopolysaccharide metabolism; 4-amino-4-deoxy-beta-L-arabinose-lipid A biosynthesis. In terms of biological role, catalyzes the transfer of the L-Ara4N moiety of the glycolipid undecaprenyl phosphate-alpha-L-Ara4N to lipid A. The modified arabinose is attached to lipid A and is required for resistance to polymyxin and cationic antimicrobial peptides. This Edwardsiella ictaluri (strain 93-146) protein is Undecaprenyl phosphate-alpha-4-amino-4-deoxy-L-arabinose arabinosyl transferase.